The chain runs to 267 residues: Phosphonates import ATP-binding protein PhnC 1 (267 aa).

An ABC transporter domain is found at 3–247 (LSLDGVDLVH…ALDALYANEQ (245 aa)). 36 to 43 (GPSGAGKT) contacts ATP.

This sequence belongs to the ABC transporter superfamily. Phosphonates importer (TC 3.A.1.9.1) family. The complex is composed of two ATP-binding proteins (PhnC), two transmembrane proteins (PhnE) and a solute-binding protein (PhnD).

Its subcellular location is the cell inner membrane. The catalysed reaction is phosphonate(out) + ATP + H2O = phosphonate(in) + ADP + phosphate + H(+). In terms of biological role, part of the ABC transporter complex PhnCDE involved in phosphonates import. Responsible for energy coupling to the transport system. This Pseudomonas aeruginosa (strain ATCC 15692 / DSM 22644 / CIP 104116 / JCM 14847 / LMG 12228 / 1C / PRS 101 / PAO1) protein is Phosphonates import ATP-binding protein PhnC 1.